Consider the following 429-residue polypeptide: Ribosomal RNA small subunit methyltransferase B (429 aa).

S-adenosyl-L-methionine is bound by residues 254-260 (CAAPGGK), aspartate 277, aspartate 303, and aspartate 322. The Nucleophile role is filled by cysteine 375. The disordered stretch occupies residues 397–419 (ALSETGTPDQPGQQNLPGGEEGD). Polar residues predominate over residues 400–412 (ETGTPDQPGQQNL).

This sequence belongs to the class I-like SAM-binding methyltransferase superfamily. RsmB/NOP family.

The protein resides in the cytoplasm. It carries out the reaction cytidine(967) in 16S rRNA + S-adenosyl-L-methionine = 5-methylcytidine(967) in 16S rRNA + S-adenosyl-L-homocysteine + H(+). Its function is as follows. Specifically methylates the cytosine at position 967 (m5C967) of 16S rRNA. In Salmonella agona (strain SL483), this protein is Ribosomal RNA small subunit methyltransferase B.